Here is a 224-residue protein sequence, read N- to C-terminus: Ribonuclease T (224 aa).

The 175-residue stretch at 32 to 206 (VVVDVETGGF…YDTEKTAELF (175 aa)) folds into the Exonuclease domain. Mg(2+) is bound by residues Asp-35, Glu-37, His-193, and Asp-198. His-193 serves as the catalytic Proton donor/acceptor.

Belongs to the RNase T family. In terms of assembly, homodimer. The cofactor is Mg(2+).

Trims short 3' overhangs of a variety of RNA species, leaving a one or two nucleotide 3' overhang. Responsible for the end-turnover of tRNA: specifically removes the terminal AMP residue from uncharged tRNA (tRNA-C-C-A). Also appears to be involved in tRNA biosynthesis. The chain is Ribonuclease T from Pseudomonas aeruginosa (strain UCBPP-PA14).